The following is a 273-amino-acid chain: Orotidine 5'-phosphate decarboxylase (273 aa).

The active-site Proton donor is the K96.

Belongs to the OMP decarboxylase family. Type 2 subfamily.

It catalyses the reaction orotidine 5'-phosphate + H(+) = UMP + CO2. Its pathway is pyrimidine metabolism; UMP biosynthesis via de novo pathway; UMP from orotate: step 2/2. This Flavobacterium johnsoniae (strain ATCC 17061 / DSM 2064 / JCM 8514 / BCRC 14874 / CCUG 350202 / NBRC 14942 / NCIMB 11054 / UW101) (Cytophaga johnsonae) protein is Orotidine 5'-phosphate decarboxylase.